Consider the following 633-residue polypeptide: Chaperone protein dnaK2 (633 aa).

T197 carries the post-translational modification Phosphothreonine; by autocatalysis. The segment at 600–633 (SNAASQAADGTSSESNNSTEGNDDVIDAEFTESK) is disordered. The span at 608–619 (DGTSSESNNSTE) shows a compositional bias: low complexity. Positions 620–633 (GNDDVIDAEFTESK) are enriched in acidic residues.

This sequence belongs to the heat shock protein 70 family.

Acts as a chaperone. The chain is Chaperone protein dnaK2 (dnaK2) from Prochlorococcus marinus (strain SARG / CCMP1375 / SS120).